The following is a 1073-amino-acid chain: Carbamoyl phosphate synthase large chain (1073 aa).

The segment at 1-403 (MPKRTDIKSI…SLQKALRGLE (403 aa)) is carboxyphosphate synthetic domain. Residues Arg129, Arg169, Gly175, Gly176, Glu208, Leu210, Glu215, Gly241, Val242, His243, Gln285, and Glu299 each coordinate ATP. One can recognise an ATP-grasp 1 domain in the interval 133 to 328 (DKAMKSIGLA…IARVAAKLAV (196 aa)). Residues Gln285, Glu299, and Asn301 each contribute to the Mg(2+) site. 3 residues coordinate Mn(2+): Gln285, Glu299, and Asn301. Residues 404–553 (VGVCGLDPKL…YSTYEEECEA (150 aa)) form an oligomerization domain region. The tract at residues 554-935 (NPSTRDKIMI…AFAKAQMGAS (382 aa)) is carbamoyl phosphate synthetic domain. The ATP-grasp 2 domain maps to 678–869 (QQMVERLNLR…LAMIAARVMA (192 aa)). The ATP site is built by Arg714, His753, Leu755, Glu760, Gly785, Val786, His787, Ser788, Gln828, and Glu840. Mg(2+)-binding residues include Gln828, Glu840, and Asn842. Mn(2+) is bound by residues Gln828, Glu840, and Asn842. The 138-residue stretch at 936 to 1073 (EVLPTGGTAF…LQDLHAGLKA (138 aa)) folds into the MGS-like domain. The allosteric domain stretch occupies residues 936 to 1073 (EVLPTGGTAF…LQDLHAGLKA (138 aa)).

The protein belongs to the CarB family. Composed of two chains; the small (or glutamine) chain promotes the hydrolysis of glutamine to ammonia, which is used by the large (or ammonia) chain to synthesize carbamoyl phosphate. Tetramer of heterodimers (alpha,beta)4. Requires Mg(2+) as cofactor. The cofactor is Mn(2+).

It carries out the reaction hydrogencarbonate + L-glutamine + 2 ATP + H2O = carbamoyl phosphate + L-glutamate + 2 ADP + phosphate + 2 H(+). The enzyme catalyses hydrogencarbonate + NH4(+) + 2 ATP = carbamoyl phosphate + 2 ADP + phosphate + 2 H(+). The protein operates within amino-acid biosynthesis; L-arginine biosynthesis; carbamoyl phosphate from bicarbonate: step 1/1. It participates in pyrimidine metabolism; UMP biosynthesis via de novo pathway; (S)-dihydroorotate from bicarbonate: step 1/3. In terms of biological role, large subunit of the glutamine-dependent carbamoyl phosphate synthetase (CPSase). CPSase catalyzes the formation of carbamoyl phosphate from the ammonia moiety of glutamine, carbonate, and phosphate donated by ATP, constituting the first step of 2 biosynthetic pathways, one leading to arginine and/or urea and the other to pyrimidine nucleotides. The large subunit (synthetase) binds the substrates ammonia (free or transferred from glutamine from the small subunit), hydrogencarbonate and ATP and carries out an ATP-coupled ligase reaction, activating hydrogencarbonate by forming carboxy phosphate which reacts with ammonia to form carbamoyl phosphate. In Pseudomonas syringae pv. tomato (strain ATCC BAA-871 / DC3000), this protein is Carbamoyl phosphate synthase large chain.